The chain runs to 96 residues: Co-chaperonin GroES (96 aa).

This sequence belongs to the GroES chaperonin family. As to quaternary structure, heptamer of 7 subunits arranged in a ring. Interacts with the chaperonin GroEL.

The protein localises to the cytoplasm. In terms of biological role, together with the chaperonin GroEL, plays an essential role in assisting protein folding. The GroEL-GroES system forms a nano-cage that allows encapsulation of the non-native substrate proteins and provides a physical environment optimized to promote and accelerate protein folding. GroES binds to the apical surface of the GroEL ring, thereby capping the opening of the GroEL channel. The chain is Co-chaperonin GroES from Shewanella baltica (strain OS223).